A 253-amino-acid chain; its full sequence is Adapter protein MecA (253 aa).

This sequence belongs to the MecA family. As to quaternary structure, homodimer.

In terms of biological role, enables the recognition and targeting of unfolded and aggregated proteins to the ClpC protease or to other proteins involved in proteolysis. This chain is Adapter protein MecA, found in Streptococcus pyogenes serotype M6 (strain ATCC BAA-946 / MGAS10394).